The chain runs to 385 residues: Podocin (385 aa).

Positions 1–27 (MDSRARSSSREAHGRSSRSSSRDDKKA) are enriched in basic and acidic residues. Residues 1–64 (MDSRARSSSR…GEPRAPAATA (64 aa)) form a disordered region. Over 1 to 104 (MDSRARSSSR…IKPSGLGACE (104 aa)) the chain is Cytoplasmic. The S-palmitoyl cysteine moiety is linked to residue C103. The helical transmembrane segment at 105 to 125 (WLLVLASLIFIIMTFPFSIWF) threads the bilayer. Over 126–385 (CIKVVQEYER…NPKKKDSPML (260 aa)) the chain is Extracellular. Polar residues predominate over residues 357–370 (NRAQGSINYPSSSK). The segment at 357-385 (NRAQGSINYPSSSKPVEPLNPKKKDSPML) is disordered. Basic and acidic residues predominate over residues 376–385 (NPKKKDSPML).

It belongs to the band 7/mec-2 family. In terms of assembly, interacts with nephrin/NPHS1, KIRRL1 and CD2AP. Interacts with DDN.

The protein resides in the membrane. Plays a role in the regulation of glomerular permeability, acting probably as a linker between the plasma membrane and the cytoskeleton. This chain is Podocin (Nphs2), found in Mus musculus (Mouse).